A 230-amino-acid chain; its full sequence is Extracellular ribonuclease LE (230 aa).

Positions 1-25 (MASNSAFSLFLILLIITQCLSVLNA) are cleaved as a signal peptide. Q37 lines the RNA pocket. Cystine bridges form between C43–C49, C50–C106, C79–C125, C186–C221, and C202–C213. RNA contacts are provided by residues H64, F114, 117 to 118 (HE), and 121 to 122 (KH). Residue H64 is the Proton donor of the active site. Residue E118 is part of the active site. The active-site Proton acceptor is the H122.

This sequence belongs to the RNase T2 family.

The protein localises to the secreted. It is found in the extracellular space. It localises to the cell wall. It catalyses the reaction a ribonucleotidyl-ribonucleotide-RNA + H2O = a 3'-end 3'-phospho-ribonucleotide-RNA + a 5'-end dephospho-ribonucleoside-RNA + H(+). Probably involved in plant phosphate-starvation rescue system. The sequence is that of Extracellular ribonuclease LE from Solanum lycopersicum (Tomato).